The sequence spans 505 residues: Maturase K (505 aa).

It belongs to the intron maturase 2 family. MatK subfamily.

Its subcellular location is the plastid. It is found in the chloroplast. Its function is as follows. Usually encoded in the trnK tRNA gene intron. Probably assists in splicing its own and other chloroplast group II introns. The chain is Maturase K from Physcomitrium patens (Spreading-leaved earth moss).